The primary structure comprises 418 residues: Metal tolerance protein 1 (418 aa).

The Cytoplasmic portion of the chain corresponds to 1–56 (MDSHNSAPPQIAEVRMDISSSTSVAAGNKVCRGAACDFSDSSNSSKDARERMASMR). Residues 57-77 (KLIIAVILCIIFMAVEVVGGI) form a helical membrane-spanning segment. Residues 78 to 89 (KANSLAILTDAA) are Vacuolar-facing. The chain crosses the membrane as a helical span at residues 90–110 (HLLSDVAAFAISLFSLWAAGW). Residues 111–122 (EATPQQSYGFFR) lie on the Cytoplasmic side of the membrane. The chain crosses the membrane as a helical span at residues 123-143 (IEILGALVSIQLIWLLAGILV). Over 144–160 (YEAIVRLINESGEVQGS) the chain is Vacuolar. A helical membrane pass occupies residues 161–181 (LMFAVSAFGLFVNIIMAVLLG). Positions 182 to 246 (HDHGHGHGHG…HHPGTGHHHH (65 aa)) are required for zinc-binding. Residues 182 to 282 (HDHGHGHGHG…RRNINVHSAY (101 aa)) lie on the Cytoplasmic side of the membrane. Positions 186–248 (HGHGHGHGHG…PGTGHHHHDA (63 aa)) are disordered. Residues 196 to 227 (HSHDHDHGGSDHDHHHHEDQEHGHVHHHEDGH) show a composition bias toward basic and acidic residues. Residues 235–245 (LHHHPGTGHHH) show a composition bias toward basic residues. Residues 283 to 303 (LHVLGDSIQSIGVMIGGAIIW) traverse the membrane as a helical segment. Residues 304-307 (YKPE) are Vacuolar-facing. A helical transmembrane segment spans residues 308 to 328 (WKIIDLICTLIFSVIVLFTTI). Topologically, residues 329 to 418 (KMLRNILEVL…SHVTIQIERE (90 aa)) are cytoplasmic.

This sequence belongs to the cation diffusion facilitator (CDF) transporter (TC 2.A.4) family. SLC30A subfamily.

Its subcellular location is the vacuole membrane. In terms of biological role, involved in sequestration of excess zinc in the cytoplasm into vacuoles to maintain zinc homeostasis. The sequence is that of Metal tolerance protein 1 (MTP1) from Oryza sativa subsp. japonica (Rice).